Consider the following 478-residue polypeptide: Glutamate--tRNA ligase (478 aa).

The short motif at 9–19 (PSPTGLLHIGT) is the 'HIGH' region element. The 'KMSKS' region motif lies at 248–252 (KLSKR). An ATP-binding site is contributed by lysine 251.

It belongs to the class-I aminoacyl-tRNA synthetase family. Glutamate--tRNA ligase type 1 subfamily. In terms of assembly, monomer.

Its subcellular location is the cytoplasm. The catalysed reaction is tRNA(Glu) + L-glutamate + ATP = L-glutamyl-tRNA(Glu) + AMP + diphosphate. Catalyzes the attachment of glutamate to tRNA(Glu) in a two-step reaction: glutamate is first activated by ATP to form Glu-AMP and then transferred to the acceptor end of tRNA(Glu). This is Glutamate--tRNA ligase from Prochlorococcus marinus subsp. pastoris (strain CCMP1986 / NIES-2087 / MED4).